The primary structure comprises 170 residues: Two-component response regulator ORR6 (170 aa).

Positions 51-170 (HVLAVDDSSV…DVSRLCSRIR (120 aa)) constitute a Response regulatory domain. A 4-aspartylphosphate modification is found at Asp-103.

This sequence belongs to the ARR family. Type-A subfamily. In terms of processing, two-component system major event consists of a His-to-Asp phosphorelay between a sensor histidine kinase (HK) and a response regulator (RR). In plants, the His-to-Asp phosphorelay involves an additional intermediate named Histidine-containing phosphotransfer protein (HPt). This multistep phosphorelay consists of a His-Asp-His-Asp sequential transfer of a phosphate group between first a His and an Asp of the HK protein, followed by the transfer to a conserved His of the HPt protein and finally the transfer to an Asp in the receiver domain of the RR protein. As to expression, expressed in roots, leaf blades, leaf sheaths, shoot apex, flowers and panicles.

Its function is as follows. Functions as a response regulator involved in His-to-Asp phosphorelay signal transduction system. Phosphorylation of the Asp residue in the receiver domain activates the ability of the protein to promote the transcription of target genes. Type-A response regulators seem to act as negative regulators of the cytokinin signaling. The sequence is that of Two-component response regulator ORR6 from Oryza sativa subsp. japonica (Rice).